Here is a 160-residue protein sequence, read N- to C-terminus: Sec-independent protein translocase protein TatB (160 aa).

A helical membrane pass occupies residues 1 to 21 (MIDLGVSKIALIGAVALIVIG). 2 disordered regions span residues 70-100 (ARDVETSIQTSASDFEKSWSDATGSDASTAT) and 133-160 (RSGVRTKAQSGAARVARFRPQSGRSSSF). Over residues 89–100 (SDATGSDASTAT) the composition is skewed to polar residues.

The protein belongs to the TatB family. In terms of assembly, the Tat system comprises two distinct complexes: a TatABC complex, containing multiple copies of TatA, TatB and TatC subunits, and a separate TatA complex, containing only TatA subunits. Substrates initially bind to the TatABC complex, which probably triggers association of the separate TatA complex to form the active translocon.

The protein resides in the cell inner membrane. Part of the twin-arginine translocation (Tat) system that transports large folded proteins containing a characteristic twin-arginine motif in their signal peptide across membranes. Together with TatC, TatB is part of a receptor directly interacting with Tat signal peptides. TatB may form an oligomeric binding site that transiently accommodates folded Tat precursor proteins before their translocation. This Polaromonas sp. (strain JS666 / ATCC BAA-500) protein is Sec-independent protein translocase protein TatB.